Here is a 296-residue protein sequence, read N- to C-terminus: MKLKRYLLVAKPGIIFGNLIAVAGGYFLAARGSVEPMLLLATVIGLSLVVASGCVLNNCIDRDIDRHMERTRGRVTVTGQISLKAALAHGLVLGVAGFGLLWWRTNPLTTALAGFGYFVYVGLYSLWFKRRSQYGTLVGSLSGAMPPVVGYCAVTGQFDAGAASLLAIFCLWQMPHSYAIAIFRLKDYEAAGIPVLPVARGIAVTKIHIVLYILAFMAATLALCLGGYAGYGYLLVAVAVSLWWLAIALTGYWTADDRLWARKLFAFSIVAITALSVMMSIDFQVAPATHLVASLP.

9 helical membrane passes run 7-27 (LLVAKPGIIFGNLIAVAGGYF), 36-56 (PMLLLATVIGLSLVVASGCVL), 83-103 (LKAALAHGLVLGVAGFGLLWW), 108-128 (LTTALAGFGYFVYVGLYSLWF), 134-154 (YGTLVGSLSGAMPPVVGYCAV), 163-183 (ASLLAIFCLWQMPHSYAIAIF), 207-227 (IHIVLYILAFMAATLALCLGG), 229-249 (AGYGYLLVAVAVSLWWLAIAL), and 265-285 (FAFSIVAITALSVMMSIDFQV).

The protein belongs to the UbiA prenyltransferase family. Protoheme IX farnesyltransferase subfamily.

Its subcellular location is the cell inner membrane. The enzyme catalyses heme b + (2E,6E)-farnesyl diphosphate + H2O = Fe(II)-heme o + diphosphate. It functions in the pathway porphyrin-containing compound metabolism; heme O biosynthesis; heme O from protoheme: step 1/1. Converts heme B (protoheme IX) to heme O by substitution of the vinyl group on carbon 2 of heme B porphyrin ring with a hydroxyethyl farnesyl side group. The polypeptide is Protoheme IX farnesyltransferase 2 (Pseudomonas paraeruginosa (strain DSM 24068 / PA7) (Pseudomonas aeruginosa (strain PA7))).